Here is a 449-residue protein sequence, read N- to C-terminus: Tubulin alpha-2 chain (449 aa).

GTP-binding residues include Q11, E71, S140, G144, T145, T179, N206, and N228. E71 lines the Mg(2+) pocket. The active site involves E254.

This sequence belongs to the tubulin family. As to quaternary structure, dimer of alpha and beta chains. A typical microtubule is a hollow water-filled tube with an outer diameter of 25 nm and an inner diameter of 15 nM. Alpha-beta heterodimers associate head-to-tail to form protofilaments running lengthwise along the microtubule wall with the beta-tubulin subunit facing the microtubule plus end conferring a structural polarity. Microtubules usually have 13 protofilaments but different protofilament numbers can be found in some organisms and specialized cells. Mg(2+) is required as a cofactor.

The protein resides in the cytoplasm. Its subcellular location is the cytoskeleton. The enzyme catalyses GTP + H2O = GDP + phosphate + H(+). Functionally, tubulin is the major constituent of microtubules, a cylinder consisting of laterally associated linear protofilaments composed of alpha- and beta-tubulin heterodimers. Microtubules grow by the addition of GTP-tubulin dimers to the microtubule end, where a stabilizing cap forms. Below the cap, tubulin dimers are in GDP-bound state, owing to GTPase activity of alpha-tubulin. The polypeptide is Tubulin alpha-2 chain (tub1) (Schizosaccharomyces pombe (strain 972 / ATCC 24843) (Fission yeast)).